Here is a 297-residue protein sequence, read N- to C-terminus: HTH-type transcriptional regulator ArgP (297 aa).

The HTH lysR-type domain maps to 4–60 (PDYRTLQALDAVIRERGFERAAQKLCITQSAVSQRIKQLENLFGQPLLVRTIPPRPT). The segment at residues 21–40 (FERAAQKLCITQSAVSQRIK) is a DNA-binding region (H-T-H motif).

This sequence belongs to the LysR transcriptional regulatory family. As to quaternary structure, homodimer.

In terms of biological role, controls the transcription of genes involved in arginine and lysine metabolism. The polypeptide is HTH-type transcriptional regulator ArgP (Pectobacterium atrosepticum (strain SCRI 1043 / ATCC BAA-672) (Erwinia carotovora subsp. atroseptica)).